The primary structure comprises 891 residues: von Willebrand factor A domain-containing protein 7 (891 aa).

A signal peptide spans 1–28 (MLPTEVPQSHPGPSALLLLQLLLPPTSA). N-linked (GlcNAc...) asparagine glycosylation occurs at N55. Residues 237-272 (PKPPGKCSHGGHFDRSSSQPPRGGINKDSTSPGFSP) form a disordered region. The 194-residue stretch at 313–506 (ASSLSFVLDT…SMAALVTLPL (194 aa)) folds into the VWFA domain.

Expressed at low level in different cell lines.

Its subcellular location is the secreted. The protein is von Willebrand factor A domain-containing protein 7 (VWA7) of Homo sapiens (Human).